We begin with the raw amino-acid sequence, 242 residues long: NADH-quinone oxidoreductase subunit C (242 aa).

Positions 67-101 are insert; the sequence is VVNSVGLGHKEQGAKPITNRRTTSDNVGESKSIDY.

Belongs to the complex I 30 kDa subunit family. NDH-1 is composed of 14 different subunits. Subunits NuoB, C, D, E, F, and G constitute the peripheral sector of the complex.

It localises to the cell inner membrane. The enzyme catalyses a quinone + NADH + 5 H(+)(in) = a quinol + NAD(+) + 4 H(+)(out). NDH-1 shuttles electrons from NADH, via FMN and iron-sulfur (Fe-S) centers, to quinones in the respiratory chain. The immediate electron acceptor for the enzyme in this species is believed to be ubiquinone. Couples the redox reaction to proton translocation (for every two electrons transferred, four hydrogen ions are translocated across the cytoplasmic membrane), and thus conserves the redox energy in a proton gradient. The protein is NADH-quinone oxidoreductase subunit C of Rickettsia conorii (strain ATCC VR-613 / Malish 7).